The sequence spans 323 residues: D-alanine--D-alanine ligase (323 aa).

Residues 121–317 (RIWFLTNNIN…FTNLIEEIIK (197 aa)) enclose the ATP-grasp domain. 147-199 (PMKRPYVIKPLAQGSSIGVEVIFAEDDFNFADYDFPYGDQVIIEQYIKGQGRE) is a binding site for ATP. Residues glutamate 270, glutamate 284, and asparagine 286 each coordinate Mg(2+).

The protein belongs to the D-alanine--D-alanine ligase family. The cofactor is Mg(2+). Mn(2+) is required as a cofactor.

It localises to the cytoplasm. It catalyses the reaction 2 D-alanine + ATP = D-alanyl-D-alanine + ADP + phosphate + H(+). It participates in cell wall biogenesis; peptidoglycan biosynthesis. In terms of biological role, cell wall formation. In Rickettsia peacockii (strain Rustic), this protein is D-alanine--D-alanine ligase.